The primary structure comprises 297 residues: MGNQLDRITHLNYSELPTGDPSGIEKDELRVGVAYFFSDEEEDLDERGQPDKFGVKAPPGCAPCPESPSRHHHHHHHHHLLHQLVLNETQFSAFRGQECIFSKVSGGPQGADLSVYAVTALPALCEPGDLLELLWLQPAPEPPAPAPHWAVYVGGGQIIHLCQGEIRQDSLYEAGAANVGRVVNSWYRYRPLVAELVVQNACGHLGLKSEEICWTNSESFAAWCRFGKREFKAGGEVPAGTQPPQQQYYLKVHLADNKVHTARFHSLEDLIREKRRIDASGRLRVLQELADLVDDKE.

Residue Ser-38 is modified to Phosphoserine. One can recognise an LRAT domain in the interval 138–233 (PAPEPPAPAP…CRFGKREFKA (96 aa)).

The protein belongs to the LRATD family.

It localises to the cytoplasm. Its function is as follows. May play a role in cell morphology and motility. This Bos taurus (Bovine) protein is Protein LRATD1 (LRATD1).